Consider the following 61-residue polypeptide: Large ribosomal subunit protein bL32 (61 aa).

Over residues 1 to 16 the composition is skewed to basic residues; sequence MAVPKRKTSPSKRGMR. Residues 1-61 form a disordered region; that stretch reads MAVPKRKTSP…RQVLTPKESA (61 aa). Residues 28–44 show a composition bias toward basic and acidic residues; the sequence is VEDKNSGELRRPHHIDL.

This sequence belongs to the bacterial ribosomal protein bL32 family.

This is Large ribosomal subunit protein bL32 from Rhizobium etli (strain CIAT 652).